The primary structure comprises 316 residues: Pantothenate kinase (316 aa).

An ATP-binding site is contributed by 95 to 102 (GSVAVGKS).

This sequence belongs to the prokaryotic pantothenate kinase family.

The protein resides in the cytoplasm. The catalysed reaction is (R)-pantothenate + ATP = (R)-4'-phosphopantothenate + ADP + H(+). Its pathway is cofactor biosynthesis; coenzyme A biosynthesis; CoA from (R)-pantothenate: step 1/5. This chain is Pantothenate kinase, found in Shewanella putrefaciens (strain CN-32 / ATCC BAA-453).